The sequence spans 61 residues: Large ribosomal subunit protein bL32 (61 aa).

The segment covering 1-16 (MAVPKRKTSPSKRGMR) has biased composition (basic residues). Residues 1–61 (MAVPKRKTSP…RSVLTPKNSG (61 aa)) are disordered. Over residues 28-44 (VEDKDSGELRRPHHIDL) the composition is skewed to basic and acidic residues.

Belongs to the bacterial ribosomal protein bL32 family.

The protein is Large ribosomal subunit protein bL32 of Bartonella bacilliformis (strain ATCC 35685 / KC583 / Herrer 020/F12,63).